Consider the following 242-residue polypeptide: Small ribosomal subunit protein eS4 (242 aa).

The S4 RNA-binding domain occupies 43–106; the sequence is LPLMIIVRDI…GDVYRVLPDE (64 aa).

This sequence belongs to the eukaryotic ribosomal protein eS4 family.

This Methanothermobacter thermautotrophicus (strain ATCC 29096 / DSM 1053 / JCM 10044 / NBRC 100330 / Delta H) (Methanobacterium thermoautotrophicum) protein is Small ribosomal subunit protein eS4 (rps4e).